Consider the following 126-residue polypeptide: Adenosine 5'-monophosphoramidase HINT1 (126 aa).

The residue at position 2 (Ala-2) is an N-acetylalanine. Residues 18–126 (IFGKIIRKEI…GGRQMNWPPG (109 aa)) enclose the HIT domain. 2 positions are modified to N6-acetyllysine: Lys-21 and Lys-30. AMP is bound at residue 43-44 (DI). Ser-45 and Ser-72 each carry phosphoserine. AMP is bound by residues Asn-99, 105–107 (GQS), and 112–114 (HLH). The short motif at 110–114 (HIHLH) is the Histidine triad motif element. His-112 serves as the catalytic Tele-AMP-histidine intermediate.

This sequence belongs to the HINT family. Homodimer. Interacts with CDK7. Interacts with RUVBL1 and RUVBL2 and is associated with the LEF1/TCF1-CTNNB1 complex and with a KAT5 histone acetyltransferase complex. Identified in a complex with MITF and CTNNB1. Interacts with CDC34 and RBX1, and is part of a SCF (SKP2-CUL1-F-box protein) E3 ubiquitin-protein ligase complex. Interacts with SUMO1, SUMO2 and RGS17. Interacts with the Ten-1 ICD form of TENM1. Interacts with CALM1; interaction increases in the presence of calcium ions.

It localises to the cytoplasm. The protein resides in the nucleus. It catalyses the reaction adenosine 5'-phosphoramidate + H2O = AMP + NH4(+). In terms of biological role, exhibits adenosine 5'-monophosphoramidase activity, hydrolyzing purine nucleotide phosphoramidates with a single phosphate group such as adenosine 5'monophosphoramidate (AMP-NH2) to yield AMP and NH2. Hydrolyzes adenosine 5'monophosphomorpholidate (AMP-morpholidate) and guanosine 5'monophosphomorpholidate (GMP-morpholidate). Hydrolyzes lysyl-AMP (AMP-N-epsilon-(N-alpha-acetyl lysine methyl ester)) generated by lysine tRNA ligase, as well as Met-AMP, His-AMP and Asp-AMP, lysyl-GMP (GMP-N-epsilon-(N-alpha-acetyl lysine methyl ester)) and AMP-N-alanine methyl ester. Can also convert adenosine 5'-O-phosphorothioate and guanosine 5'-O-phosphorothioate to the corresponding nucleoside 5'-O-phosphates with concomitant release of hydrogen sulfide. In addition, functions as a scaffolding protein that modulates transcriptional activation by the LEF1/TCF1-CTNNB1 complex and by the complex formed with MITF and CTNNB1. Modulates p53/TP53 levels and p53/TP53-mediated apoptosis. Modulates proteasomal degradation of target proteins by the SCF (SKP2-CUL1-F-box protein) E3 ubiquitin-protein ligase complex. Also exhibits SUMO-specific isopeptidase activity, deconjugating SUMO1 from RANGAP1 and RGS17. This chain is Adenosine 5'-monophosphoramidase HINT1 (Hint1), found in Rattus norvegicus (Rat).